The following is a 1030-amino-acid chain: Subtilin biosynthesis protein SpaB (1030 aa).

To S.epidermidis EpiB and L.lactis NisB.

Its subcellular location is the cell membrane. In terms of biological role, involved in the post-translational modification of the lantibiotic subtilin. The chain is Subtilin biosynthesis protein SpaB (spaB) from Bacillus subtilis.